We begin with the raw amino-acid sequence, 90 residues long: Acylphosphatase (90 aa).

Residues 3-90 (HYHAIITGRV…AHYQDFRIKG (88 aa)) form the Acylphosphatase-like domain. Active-site residues include Arg18 and Asn36.

It belongs to the acylphosphatase family.

The catalysed reaction is an acyl phosphate + H2O = a carboxylate + phosphate + H(+). In Bacillus pumilus (strain SAFR-032), this protein is Acylphosphatase (acyP).